The primary structure comprises 259 residues: 14-3-3-like protein (259 aa).

The disordered stretch occupies residues 237–259; sequence DTTDDAEDEIREGSKQESGDGQQ. The segment covering 247–259 has biased composition (basic and acidic residues); that stretch reads REGSKQESGDGQQ.

This sequence belongs to the 14-3-3 family. As to expression, leaves specific.

The chain is 14-3-3-like protein from Solanum tuberosum (Potato).